Here is a 189-residue protein sequence, read N- to C-terminus: Stathmin-4 (189 aa).

2 S-palmitoyl cysteine lipidation sites follow: cysteine 20 and cysteine 22. Residues serine 48–arginine 189 enclose the SLD domain. Phosphoserine is present on residues glutamate 54 and serine 90. Residues serine 90 to arginine 189 adopt a coiled-coil conformation. Residues glutamine 168 to arginine 189 form a disordered region.

Belongs to the stathmin family. In terms of tissue distribution, nervous tissue.

It localises to the golgi apparatus. It is found in the cell projection. Its subcellular location is the growth cone. The protein localises to the axon. Exhibits microtubule-destabilizing activity. The protein is Stathmin-4 (Stmn4) of Rattus norvegicus (Rat).